The sequence spans 118 residues: Beta-2-microglobulin (118 aa).

The N-terminal stretch at 1 to 20 is a signal peptide; the sequence is MARVVALVLLGLLSLTGLEA. One can recognise an Ig-like C1-type domain in the interval 25-111; that stretch reads PKVQVYSRHP…QHSTLKEPLI (87 aa). A disulfide bridge links C45 with C99.

It belongs to the beta-2-microglobulin family. Heterodimer of an alpha chain and a beta chain. Beta-2-microglobulin is the beta-chain of major histocompatibility complex class I molecules.

The protein localises to the secreted. Component of the class I major histocompatibility complex (MHC). Involved in the presentation of peptide antigens to the immune system. The protein is Beta-2-microglobulin (B2M) of Equus asinus (Donkey).